The chain runs to 519 residues: T-box transcription factor TBX5 (519 aa).

The disordered stretch occupies residues 1-43; sequence MADTEEAYGMPDTPVEAEPKELQCEPKQDNQMGASSKTPTSPQ. Positions 17–28 are enriched in basic and acidic residues; it reads AEPKELQCEPKQ. A compositionally biased stretch (polar residues) spans 29-43; sequence DNQMGASSKTPTSPQ. The T-box DNA-binding region spans 63 to 238; that stretch reads LWLKFHEVGT…NNPFAKGFRG (176 aa). 2 disordered regions span residues 254 to 312 and 335 to 376; these read EYPV…SAYP and ELSY…TESA. Over residues 262-303 the composition is skewed to polar residues; sequence TVRQKVSSNHSPFSQETRNITGSSTLNSQYQCENGVSSTSQD.

In terms of assembly, monomer. Homodimer (via the T-box); binds DNA as homodimer.

Its subcellular location is the nucleus. The protein resides in the cytoplasm. Its function is as follows. DNA-binding protein that regulates the transcription of several genes and is involved in heart development and limb pattern formation. May bind to the core DNA motif of promoters. The protein is T-box transcription factor TBX5 (tbx5) of Xenopus tropicalis (Western clawed frog).